The following is a 670-amino-acid chain: Thrombospondin-type laminin G domain and EAR repeat-containing protein (670 aa).

Positions 1 to 20 are cleaved as a signal peptide; sequence MSALLMLCAVLLLLGTPSRG. The Laminin G-like domain occupies 59 to 278; the sequence is GLQFSATEPR…KVTLGSRPPC (220 aa). EAR repeat units lie at residues 314–359, 361–409, 413–461, 465–513, 515–571, 575–623, and 626–669; these read DYVE…KWTD, KFVS…KWSP, KFTL…RWNP, LFEA…IWLV, AFQL…ELNI, TFVK…RWQG, and GFVA…KLRT. Asparagine 498 carries N-linked (GlcNAc...) asparagine glycosylation.

In terms of tissue distribution, in the organ of Corti, expression at postnatal day 1 (P1) is restricted to the basal region of the stereocilia of inner and outer hair cells (at protein level). Expressed in the organ of Corti at P1 and P7, in cochlear ganglion, stria vascularis and vestibular ends at P7, and in inferior colliculus, remaining brainstem, cerebellum, brain hemispheres and retina at P1, P7 and in the adult. Also detected in adult liver, lung, kidney, intestine and testis but not in heart or skeletal muscle.

The protein resides in the secreted. The protein localises to the cell surface. Its subcellular location is the cell projection. It localises to the stereocilium. Plays a critical role in tooth and hair follicle morphogenesis through regulation of the Notch signaling pathway. May play a role in development or function of the auditory system. This chain is Thrombospondin-type laminin G domain and EAR repeat-containing protein, found in Mus musculus (Mouse).